Reading from the N-terminus, the 706-residue chain is Serine/threonine-protein kinase BUR1 (706 aa).

The Protein kinase domain occupies 38-339; it reads YKPLGKIGEG…AIGGKNHAYF (302 aa). ATP is bound by residues 44–52 and Lys67; that span reads IGEGTFGEV. The active-site Proton acceptor is Asp168. Composition is skewed to basic and acidic residues over residues 360–523, 545–570, and 594–623; these read LDNH…RDSR, DYDR…DMTR, and DKVE…KSRD. Residues 360–706 form a disordered region; sequence LDNHKRREQE…YGRKRPRIER (347 aa). Over residues 625 to 648 the composition is skewed to pro residues; it reads GPPPGPPLPADGPPPPPSSNPPRP. Residues 659–706 show a composition bias toward basic and acidic residues; that stretch reads WRRDSRDRRESRDRDGRDRDGRDRRLSSSRYARDEFDEYGRKRPRIER.

This sequence belongs to the protein kinase superfamily. CMGC Ser/Thr protein kinase family. CDC2/CDKX subfamily.

The protein resides in the nucleus. It catalyses the reaction L-seryl-[protein] + ATP = O-phospho-L-seryl-[protein] + ADP + H(+). It carries out the reaction L-threonyl-[protein] + ATP = O-phospho-L-threonyl-[protein] + ADP + H(+). The enzyme catalyses [DNA-directed RNA polymerase] + ATP = phospho-[DNA-directed RNA polymerase] + ADP + H(+). Its function is as follows. Serine/threonine-protein kinase involved in transcription regulation. Phosphorylates the UBC2/RAD6 ubiquitin-conjugating enzyme (E2), leading to monoubiquitination of histone H2B and the silencing of telomeric-associated genes. Also required for histone H3 methylation. Necessary for the recovery from pheromone-induced growth arrest in the cell cycle G1 phase. The sequence is that of Serine/threonine-protein kinase BUR1 (BUR1) from Yarrowia lipolytica (strain CLIB 122 / E 150) (Yeast).